Here is a 211-residue protein sequence, read N- to C-terminus: uncharacterized protein (211 aa).

6 helical membrane-spanning segments follow: residues 21 to 38 (WYVI…ASEI), 53 to 75 (WGMD…YAAV), 82 to 104 (TAYL…MGVA), 124 to 146 (IFYA…AANV), 159 to 178 (PLLI…YWVY), and 188 to 210 (AVSF…LMEW).

The protein localises to the cell membrane. This is an uncharacterized protein from Archaeoglobus fulgidus (strain ATCC 49558 / DSM 4304 / JCM 9628 / NBRC 100126 / VC-16).